Consider the following 424-residue polypeptide: MTQMEMARKGVVSDEMKKVAEYEGVDVEIVRQKLAEGRAVLPKNKLHRIERPMIVGEGFSVKVNANIGTSQGFSSLEEEKEKARVAIEYGADSLMVLSTWGDLREIRRAIVEMSPVPVGSVPIYDSAVRSYQMKKNVVDFSEKDFFDMVIAHAEDGIDFMTIHVGVTRRVLDRIKSSRRVLKIVSRGGAIIAGWMIKNNRENPFYEHFDELLDIAKDYDITLSLGDGMRPGAVVDASDAQQFEELFVMGELVEKAREKGVQVMLEGPGHVPLNEVEMNVRLMKKIGKGAPIFLLGPLPTDRAMGYDHIACAIGGALAGYYGADFLCYVTPSEHISLPDVEDVREGVIASKIAAIVADVARGNKKAWELEKKMALARKNFDWETMFSLSLGKDVAKKKYEERPYPDKGCSMCGPFCAIKIAEEFS.

Substrate is bound by residues asparagine 66, methionine 95, tyrosine 124, histidine 163, 185–187, 226–229, and glutamate 265; these read SRG and DGMR. Histidine 269 is a binding site for Zn(2+). Phenylalanine 292 contributes to the substrate binding site. Histidine 333 contacts Zn(2+). Residues cysteine 408, cysteine 411, and cysteine 415 each coordinate [4Fe-4S] cluster.

This sequence belongs to the ThiC family. It depends on [4Fe-4S] cluster as a cofactor.

It carries out the reaction 5-amino-1-(5-phospho-beta-D-ribosyl)imidazole + S-adenosyl-L-methionine = 4-amino-2-methyl-5-(phosphooxymethyl)pyrimidine + CO + 5'-deoxyadenosine + formate + L-methionine + 3 H(+). Its pathway is cofactor biosynthesis; thiamine diphosphate biosynthesis. Functionally, catalyzes the synthesis of the hydroxymethylpyrimidine phosphate (HMP-P) moiety of thiamine from aminoimidazole ribotide (AIR) in a radical S-adenosyl-L-methionine (SAM)-dependent reaction. In Thermotoga sp. (strain RQ2), this protein is Phosphomethylpyrimidine synthase.